The sequence spans 351 residues: MSLQWWRDTCREADPQMRRRAAERQDRLTKPRGSLGRLEQVAIDLAALQGRERPSLERIWVTVFAGDHGVVAEGISAYPQAVTGEMLRNFVRGGAAISVLARELGAGLEVVDLGTAFPLEALPGVRHLRLAAGTANFVEAPAMGAEECLLALEAGRESVRRAEQAGSQLFIGGEMGIGNTTAAAAMACALLDAPASALVGPGTGLDASGVAHKAAVIERALALHGAHRADPFETLRRLGGLEIAALAGAYLACAQKGMVALVDGYICSVAALCAVRLNPACRDWLLFAHSGAEPGHRHVLEALAAQPLLDLGLRLGEGSGAALAVPLLRQACALHAGMATFAEAAVSDRPA.

The active-site Proton acceptor is Glu317.

The protein belongs to the CobT family.

It carries out the reaction 5,6-dimethylbenzimidazole + nicotinate beta-D-ribonucleotide = alpha-ribazole 5'-phosphate + nicotinate + H(+). Its pathway is nucleoside biosynthesis; alpha-ribazole biosynthesis; alpha-ribazole from 5,6-dimethylbenzimidazole: step 1/2. In terms of biological role, catalyzes the synthesis of alpha-ribazole-5'-phosphate from nicotinate mononucleotide (NAMN) and 5,6-dimethylbenzimidazole (DMB). This chain is Nicotinate-nucleotide--dimethylbenzimidazole phosphoribosyltransferase, found in Pseudomonas aeruginosa (strain ATCC 15692 / DSM 22644 / CIP 104116 / JCM 14847 / LMG 12228 / 1C / PRS 101 / PAO1).